Reading from the N-terminus, the 266-residue chain is MLTYPQIDPVALAVGPLKIHWYGLMYLIGIGGAWLLASRRMKRFDPTWTKERLSDLVFWVACGVILGGRLGYVLFYNLDEYIANPTLIFEVWKGGMSFHGGLLGVMLAVWWFGKRHGKSFFQLMDFIAPLVPIGLGAGRIGNFINSELWGKVSDVPWAMVFPNGGPLPRHPSQLYQFALEGVALFVILWLFTRKPRPTASVSGLFVLCYGIFRFVVEFVRVPDAQLGYLAWGWLTMGQVLCVPMVLAGIALMVWAYRRDAAQPKAA.

7 helical membrane-spanning segments follow: residues 17-37, 56-76, 92-112, 120-140, 171-191, 199-219, and 233-253; these read LKIHWYGLMYLIGIGGAWLLA, LVFWVACGVILGGRLGYVLFY, WKGGMSFHGGLLGVMLAVWWF, FFQLMDFIAPLVPIGLGAGRI, PSQLYQFALEGVALFVILWLF, ASVSGLFVLCYGIFRFVVEFV, and WLTMGQVLCVPMVLAGIALMV. R139 serves as a coordination point for a 1,2-diacyl-sn-glycero-3-phospho-(1'-sn-glycerol).

It belongs to the Lgt family.

The protein localises to the cell inner membrane. The catalysed reaction is L-cysteinyl-[prolipoprotein] + a 1,2-diacyl-sn-glycero-3-phospho-(1'-sn-glycerol) = an S-1,2-diacyl-sn-glyceryl-L-cysteinyl-[prolipoprotein] + sn-glycerol 1-phosphate + H(+). It functions in the pathway protein modification; lipoprotein biosynthesis (diacylglyceryl transfer). Functionally, catalyzes the transfer of the diacylglyceryl group from phosphatidylglycerol to the sulfhydryl group of the N-terminal cysteine of a prolipoprotein, the first step in the formation of mature lipoproteins. This is Phosphatidylglycerol--prolipoprotein diacylglyceryl transferase from Pseudomonas aeruginosa (strain UCBPP-PA14).